The following is an 89-amino-acid chain: UPF0145 protein MJ1170 (89 aa).

This sequence belongs to the UPF0145 family. Highly divergent.

This Methanocaldococcus jannaschii (strain ATCC 43067 / DSM 2661 / JAL-1 / JCM 10045 / NBRC 100440) (Methanococcus jannaschii) protein is UPF0145 protein MJ1170.